Here is a 68-residue protein sequence, read N- to C-terminus: Large ribosomal subunit protein bL35 (68 aa).

The protein belongs to the bacterial ribosomal protein bL35 family.

In Rickettsia akari (strain Hartford), this protein is Large ribosomal subunit protein bL35.